The primary structure comprises 261 residues: Small ribosomal subunit protein mS23 (261 aa).

Residues 228–261 are disordered; it reads EQRAAAFTGAPEIPSTEDSLGLEEGVEEKQPQQA.

It belongs to the mitochondrion-specific ribosomal protein mS23 family. As to quaternary structure, component of the mitochondrial small ribosomal subunit.

It localises to the mitochondrion. This is Small ribosomal subunit protein mS23 (rsm25) from Aspergillus oryzae (strain ATCC 42149 / RIB 40) (Yellow koji mold).